The primary structure comprises 154 residues: Small ribosomal subunit protein uS13 (154 aa).

The protein belongs to the universal ribosomal protein uS13 family.

It localises to the cytoplasm. Its function is as follows. Located at the top of the head of the 40S subunit, it contacts several helices of the 18S rRNA. This Dictyostelium discoideum (Social amoeba) protein is Small ribosomal subunit protein uS13 (rps18).